The primary structure comprises 98 residues: Putative membrane protein insertion efficiency factor (98 aa).

Belongs to the UPF0161 family.

The protein resides in the cell inner membrane. Its function is as follows. Could be involved in insertion of integral membrane proteins into the membrane. This chain is Putative membrane protein insertion efficiency factor, found in Cupriavidus pinatubonensis (strain JMP 134 / LMG 1197) (Cupriavidus necator (strain JMP 134)).